The sequence spans 533 residues: Non-specific phospholipase C1 (533 aa).

A signal peptide spans 1–22 (MAFRRVLTTVILFCYLLISSQS).

It belongs to the bacterial phospholipase C family. In terms of tissue distribution, expressed in roots, leaves, stems, flowers and siliques.

It localises to the secreted. The protein is Non-specific phospholipase C1 (NPC1) of Arabidopsis thaliana (Mouse-ear cress).